A 630-amino-acid chain; its full sequence is SHC-transforming protein 4 (630 aa).

The CH2 stretch occupies residues 1–185 (MRERGQDSLA…RQDRHFLQHL (185 aa)). Disordered regions lie at residues 39-80 (TSLD…QESP) and 118-150 (KLQE…QQDL). Residues 125-142 (PGSSGPSSPETSLSRSGT) are compositionally biased toward low complexity. A PID domain is found at 186–369 (LGMGMNYCVR…VHIDSHAEER (184 aa)). The tract at residues 370 to 525 (EDHEYYNEIP…HIKQQLWSEE (156 aa)) is CH1. At Tyr424 the chain carries Phosphotyrosine. Polar residues-rich tracts occupy residues 471–486 (LQST…SAQP) and 502–513 (PGATAQPASSHS). The tract at residues 471–514 (LQSTPGSAGNQRSAQPLGSPWHCGKAPETVQPGATAQPASSHSL) is disordered. The 92-residue stretch at 526–617 (CYHGKLSRKA…GSEVSLKQPV (92 aa)) folds into the SH2 domain.

Interacts (via PID domain) with phosphorylated MUSK (via NPXY motif); undergoes tyrosine phosphorylation downstream of activated MUSK. Interacts with GRB2; the interaction is dependent of Tyr-424 phosphorylation and increased by EGF. Post-translationally, phosphorylated; the phosphorylation is enhanced by EGF. Phosphorylation at Tyr-424 is required for the interaction with GRB2. In terms of tissue distribution, only expressed in melanomas. Weakly expressed in normal melanocytes and benign nevi. Highly expressed at the transition from radial growth phase to vertical growth phase and metastatic melanomas, when tumor cells acquire migratory competence and invasive potential.

The protein resides in the postsynaptic cell membrane. Its function is as follows. Activates both Ras-dependent and Ras-independent migratory pathways in melanomas. Contributes to the early phases of agrin-induced tyrosine phosphorylation of CHRNB1. This chain is SHC-transforming protein 4 (SHC4), found in Homo sapiens (Human).